A 287-amino-acid chain; its full sequence is MLTRITLPSPAKLNLFLHIVGRRPDGYHELQTLFQFLDYGDELTFTLTPEQPGIRLAEPVPGVPDSDNLVIRAAKALAATTENTLPGVTIHIHKRLPMGGGLGGGSSNAATTLLAMNRLWELNLCEDQLAEIGLRLGADVPVFVRGHAAFGEGVGEKLTPTNPPEDWFVVLKPECNISTGKIFSAEGLTRDTPKIKIRPAFEGDASRYRNDCEDVVRKLYPEVNQSLEWLSQFGPARLTGTGACIFGRFPTESAARIIWESKPSGITGFVAKGVNHSPLHKKLTELK.

Lys12 is a catalytic residue. 97-107 is a binding site for ATP; sequence PMGGGLGGGSS. Residue Asp139 is part of the active site.

The protein belongs to the GHMP kinase family. IspE subfamily.

The enzyme catalyses 4-CDP-2-C-methyl-D-erythritol + ATP = 4-CDP-2-C-methyl-D-erythritol 2-phosphate + ADP + H(+). It participates in isoprenoid biosynthesis; isopentenyl diphosphate biosynthesis via DXP pathway; isopentenyl diphosphate from 1-deoxy-D-xylulose 5-phosphate: step 3/6. Its function is as follows. Catalyzes the phosphorylation of the position 2 hydroxy group of 4-diphosphocytidyl-2C-methyl-D-erythritol. This is 4-diphosphocytidyl-2-C-methyl-D-erythritol kinase from Marinobacter nauticus (strain ATCC 700491 / DSM 11845 / VT8) (Marinobacter aquaeolei).